Consider the following 377-residue polypeptide: Chaperone protein DnaJ (377 aa).

The J domain occupies 5–69; the sequence is DYYEVLGVSK…NKRANYDQFG (65 aa). The CR-type zinc-finger motif lies at 134-216; sequence GTEKEISIRK…CHGKGTETKN (83 aa). C147, C150, C164, C167, C190, C193, C204, and C207 together coordinate Zn(2+). CXXCXGXG motif repeat units follow at residues 147–154, 164–171, 190–197, and 204–211; these read CETCDGSG, CHYCNGSG, CPVCNGTG, and CPTCHGKG.

Belongs to the DnaJ family. As to quaternary structure, homodimer. Zn(2+) serves as cofactor.

The protein resides in the cytoplasm. In terms of biological role, participates actively in the response to hyperosmotic and heat shock by preventing the aggregation of stress-denatured proteins and by disaggregating proteins, also in an autonomous, DnaK-independent fashion. Unfolded proteins bind initially to DnaJ; upon interaction with the DnaJ-bound protein, DnaK hydrolyzes its bound ATP, resulting in the formation of a stable complex. GrpE releases ADP from DnaK; ATP binding to DnaK triggers the release of the substrate protein, thus completing the reaction cycle. Several rounds of ATP-dependent interactions between DnaJ, DnaK and GrpE are required for fully efficient folding. Also involved, together with DnaK and GrpE, in the DNA replication of plasmids through activation of initiation proteins. The polypeptide is Chaperone protein DnaJ (Staphylococcus carnosus (strain TM300)).